A 406-amino-acid polypeptide reads, in one-letter code: Acetyltransferase sirH (406 aa).

6 helical membrane-spanning segments follow: residues 9 to 29 (IFIEAQLPLIYANIILAFALG), 32 to 52 (AHTFRVCLTLPILLFLVCQSL), 63 to 83 (LLSNNSLVMFTVFVYIDWILL), 295 to 315 (VQLFVGFGVSAGLHAGVALLC), 323 to 343 (SALFFFGIQAPIIMLEDHVIA), and 358 to 378 (FIGFVWTTLAIGFTCRAWVGS).

It belongs to the wax synthase family.

The protein localises to the membrane. The protein operates within mycotoxin biosynthesis. In terms of biological role, acetyltransferase; part of the gene cluster that mediates the biosynthesis of sirodesmin PL, an epipolythiodioxopiperazine (ETP) characterized by a disulfide bridged cyclic dipeptide and that acts as a phytotoxin which is involved in the blackleg didease of canola. SirD catalyzes the O-prenylation of L-tyrosine (L-Tyr) in the presence of dimethylallyl diphosphate (DMAPP) to yield 4-O-dimethylallyl-L-Tyr, and therefore represents probably the first pathway-specific enzyme in the biosynthesis of sirodesmin PL. 4-O-dimethylallyl-L-Tyr, then undergoes condensation with L-Ser in a reaction catalyzed by the non-ribosomal peptide synthase sirP to form the diketopiperazine (DKP) backbone. Further bishydroxylation of the DKP performed by the cytochrome P450 monooxygenase sirC leads to the production of the intermediate phomamide. This step is essential to form the reactive thiol group required for toxicity of sirodesmin PL. The next steps of sirodesmin biosynthesis are not well understood yet, but some predictions could be made from intermediate compounds identification. Phomamide is converted into phomalizarine via oxidation, probably by sirT. Further oxidation, methylation (by sirM or sirN) and reduction steps convert phomalizarine to deacetyl sirodesmin. Finally, acetyltransferase sirH probably acetylates deacetyl sirodesmin to produce sirodesmin PL. This is Acetyltransferase sirH from Leptosphaeria maculans (Blackleg fungus).